Reading from the N-terminus, the 209-residue chain is Octanoyltransferase (209 aa).

In terms of domain architecture, BPL/LPL catalytic spans 30 to 209 (VNEPEIVYLV…IQTEFNKIFT (180 aa)). Substrate-binding positions include 69-76 (RGGKFTFH), 143-145 (AIG), and 156-158 (GVA). C174 functions as the Acyl-thioester intermediate in the catalytic mechanism.

The protein belongs to the LipB family.

It localises to the cytoplasm. It carries out the reaction octanoyl-[ACP] + L-lysyl-[protein] = N(6)-octanoyl-L-lysyl-[protein] + holo-[ACP] + H(+). The protein operates within protein modification; protein lipoylation via endogenous pathway; protein N(6)-(lipoyl)lysine from octanoyl-[acyl-carrier-protein]: step 1/2. In terms of biological role, catalyzes the transfer of endogenously produced octanoic acid from octanoyl-acyl-carrier-protein onto the lipoyl domains of lipoate-dependent enzymes. Lipoyl-ACP can also act as a substrate although octanoyl-ACP is likely to be the physiological substrate. This Rickettsia canadensis (strain McKiel) protein is Octanoyltransferase.